Here is a 110-residue protein sequence, read N- to C-terminus: Light-harvesting complex-like protein OHP1, chloroplastic (110 aa).

A chloroplast-targeting transit peptide spans 1–41 (MSSSPLSSSLFHPLSTLSTHCHGRRQNLCFNRKQQPFVVRA). Residues 42–74 (AKLPEGVIVPKAQPKSQPAFLGFTQTAEIWNSR) are Stromal-facing. A helical membrane pass occupies residues 75–95 (ACMIGLIGTFIVELILNKGIL). Residues 96 to 110 (ELIGVEIGKGLDLPL) are Lumenal-facing.

It belongs to the ELIP/psbS family. May bind chlorophyll and form dimers in the thylakoid membrane. Component of a high molecular weight complex containing OHP1, OHP2 and HCF244, and PSII core proteins D1/D2, HCF136 and HCF173. Interacts with HCF244. Forms a trimeric complex with OHP2 and HCF244 that mutually stabilizes each subunit. In terms of tissue distribution, mostly expressed in cotyledons and shoot apices.

It is found in the plastid. It localises to the chloroplast thylakoid membrane. Its function is as follows. May play a photoprotective role in the thylakoid membrane in response to light stress. Involved in photosystems I (PSI) and II (PSII) core proteins function. Forms a trimeric complex with OHP2 and HCF244 that is required to promote PSII core subunit assembly. The trimeric complex forms a transient PSII reaction center-like complex with PsbA, PsbD, PsbE, PsbF and PsbI subunits in thylakoids for early assembly of PSII as well as PSII repair. The trimeric complex is required for the recruitment of ribosomes to the psbA mRNA during PSII biogenesis and repair. Forms a heterodimer with OHP1 that binds chlorophylls and carotenoids, and that may function in the delivery of pigments to the PsbA subunit of PSII. This chain is Light-harvesting complex-like protein OHP1, chloroplastic, found in Arabidopsis thaliana (Mouse-ear cress).